The primary structure comprises 86 residues: Large ribosomal subunit protein bL27 (86 aa).

Residues 1 to 10 are compositionally biased toward gly residues; sequence MAQKKGGGST. Residues 1–20 form a disordered region; it reads MAQKKGGGSTRNGRDSESKR.

The protein belongs to the bacterial ribosomal protein bL27 family.

This Polynucleobacter necessarius subsp. necessarius (strain STIR1) protein is Large ribosomal subunit protein bL27.